An 88-amino-acid chain; its full sequence is Carboxysome shell vertex protein CsoS4A (88 aa).

The BMV domain maps to 1–76; it reads MLICKVLKPL…SDLTIVGIID (76 aa).

It belongs to the CcmL/EutN family. CsoS4 subfamily. Homopentamer.

The protein localises to the carboxysome. Functionally, probably forms vertices in the carboxysome, a polyhedral inclusion where RuBisCO (ribulose bisphosphate carboxylase, cbbL-cbbS) is sequestered. Has been modeled to induce curvature upon insertion into an otherwise flat hexagonal layer of major carboxysome subunits. Has not been identified in purified carboxysomes; it is expected to be present in very low amounts. The protein is Carboxysome shell vertex protein CsoS4A of Prochlorococcus marinus subsp. pastoris (strain CCMP1986 / NIES-2087 / MED4).